The primary structure comprises 95 residues: MANHPSAKKMIKVIKKRTMVNRMRKSRAHNYVKKFLLALAAGNKELMVETFKKAESNLHKCVNKKIIHRNTAARKISRMALKLKTFDLQQQAKAL.

The protein belongs to the bacterial ribosomal protein bS20 family.

Functionally, binds directly to 16S ribosomal RNA. In Ehrlichia canis (strain Jake), this protein is Small ribosomal subunit protein bS20.